Consider the following 147-residue polypeptide: Nucleoside diphosphate kinase (147 aa).

Positions 9, 57, 85, 91, 102, and 112 each coordinate ATP. His-115 functions as the Pros-phosphohistidine intermediate in the catalytic mechanism.

This sequence belongs to the NDK family. Homotetramer. It depends on Mg(2+) as a cofactor.

The protein localises to the cytoplasm. The catalysed reaction is a 2'-deoxyribonucleoside 5'-diphosphate + ATP = a 2'-deoxyribonucleoside 5'-triphosphate + ADP. It catalyses the reaction a ribonucleoside 5'-diphosphate + ATP = a ribonucleoside 5'-triphosphate + ADP. Its function is as follows. Major role in the synthesis of nucleoside triphosphates other than ATP. The ATP gamma phosphate is transferred to the NDP beta phosphate via a ping-pong mechanism, using a phosphorylated active-site intermediate. The polypeptide is Nucleoside diphosphate kinase (Listeria monocytogenes serotype 4a (strain HCC23)).